Reading from the N-terminus, the 365-residue chain is MNFQFLAIFSVRLATKEEVLDRTQESGDVNVVWVFTYNSNREFSVFEFILINFLFLLSIFVTFIGVFCIGKSNIPHRNARWIIISGMLLWLELVVSRSFVFIFQWSSDGLQSRSGLLFWAALLRYHYMFFGVHTLLCITAERAMATILLKDYETRPRVWIAAILIGANFLISLTYAFLAVFQQILMKSIFIVCLAVAVVSIILLEIIYFLNRKRLDSLIRHDNTMVLYTLSIKYQLQENVRSCRLMRPAVVVVGAFIIMLILAECLPIILDFSDEVQMWCNLIFDTTVHTDPLVVVPTVVALMESFRKVFLSYYRTLQHKIRPNTVAVIRRKSIFPFTKPKETEGDIYFEMFNKSVSPNSLAVKK.

Transmembrane regions (helical) follow at residues 49 to 69 (ILINFLFLLSIFVTFIGVFCI), 82 to 102 (IIISGMLLWLELVVSRSFVFI), 116 to 136 (LLFWAALLRYHYMFFGVHTLL), 158 to 178 (VWIAAILIGANFLISLTYAFL), 189 to 209 (IFIVCLAVAVVSIILLEIIYF), 250 to 270 (VVVVGAFIIMLILAECLPIIL), and 292 to 314 (PLVVVPTVVALMESFRKVFLSYY).

It belongs to the nematode receptor-like protein sre family.

The protein localises to the membrane. This chain is Serpentine receptor class epsilon-21 (sre-21), found in Caenorhabditis elegans.